The primary structure comprises 397 residues: ATP phosphoribosyltransferase regulatory subunit (397 aa).

The protein belongs to the class-II aminoacyl-tRNA synthetase family. HisZ subfamily. In terms of assembly, heteromultimer composed of HisG and HisZ subunits.

It localises to the cytoplasm. Its pathway is amino-acid biosynthesis; L-histidine biosynthesis; L-histidine from 5-phospho-alpha-D-ribose 1-diphosphate: step 1/9. Required for the first step of histidine biosynthesis. May allow the feedback regulation of ATP phosphoribosyltransferase activity by histidine. The protein is ATP phosphoribosyltransferase regulatory subunit of Halalkalibacterium halodurans (strain ATCC BAA-125 / DSM 18197 / FERM 7344 / JCM 9153 / C-125) (Bacillus halodurans).